Here is a 290-residue protein sequence, read N- to C-terminus: Elongation factor Ts (290 aa).

Residues 80-83 (TDFV) are involved in Mg(2+) ion dislocation from EF-Tu.

It belongs to the EF-Ts family.

The protein resides in the cytoplasm. In terms of biological role, associates with the EF-Tu.GDP complex and induces the exchange of GDP to GTP. It remains bound to the aminoacyl-tRNA.EF-Tu.GTP complex up to the GTP hydrolysis stage on the ribosome. This chain is Elongation factor Ts, found in Neorickettsia sennetsu (strain ATCC VR-367 / Miyayama) (Ehrlichia sennetsu).